The sequence spans 386 residues: O-methyltransferase aunE (386 aa).

Trp200 contributes to the S-adenosyl-L-methionine binding site. The active-site Proton acceptor is His299.

Belongs to the class I-like SAM-binding methyltransferase superfamily. Cation-independent O-methyltransferase family.

The protein operates within secondary metabolite biosynthesis. Its function is as follows. O-methyltransferase; part of the gene cluster that mediates the biosynthesis of aurasperone B, a dimeric gamma-naphthopyrone. The first step in the biosynthesis of aurasperone B is the production of gamma-naphthopyrone precursor YWA1 by the non-reducing polyketide synthase albA, via condensation of one acetyl-CoA starter unit with 6 malonyl-CoA units. YWA1 is then methylated by aunE at position C-6 to yield foncesin which is further methylated at position C-8 by aunD to produce fonsecin B. A key enzyme in the biosynthetic pathway is the cytochrome P450 monooxygenase aunB which catalyzes the oxidative dimerization of fonsecin B to aurasperone B. AunB also catalyzes the oxidative dimerization of rubrofusarin B into aurasperone A. The polypeptide is O-methyltransferase aunE (Aspergillus niger (strain ATCC MYA-4892 / CBS 513.88 / FGSC A1513)).